Consider the following 1135-residue polypeptide: Exportin-5 (1135 aa).

In terms of domain architecture, Importin N-terminal spans 32–117; that stretch reads SQVFLEEIKT…KEKLVTILVD (86 aa). A pre-siRNA binding region spans residues 630 to 631; sequence TE.

Belongs to the exportin family. In terms of assembly, found in a nuclear export complex with RanGTP, exportin and pre-miRNA.

It is found in the nucleus. The protein resides in the cytoplasm. Its function is as follows. Mediates the nuclear export of proteins bearing a double-stranded RNA binding domain (dsRBD) and double-stranded RNAs (cargos). Functionally, mediates the nuclear export of micro-RNA precursors, which form short hairpins. In Dictyostelium discoideum (Social amoeba), this protein is Exportin-5 (xpo5).